Here is a 324-residue protein sequence, read N- to C-terminus: Bacilliredoxin reductase Bdr (324 aa).

C220 bears the S-bacillithiol cysteine disulfide mark.

As to quaternary structure, interacts with BrxC. FAD is required as a cofactor. Post-translationally, C-terminal Cys can react with bacillithiol (BSH) to form mixed disulfides. S-bacillithiolation protects Cys residues against overoxidation by acting as a redox switch in response to oxidative stress.

S-bacillithiolation is the formation of mixed disulfide bonds between protein thiols and the general thiol reductant bacillithiol (BSH) under oxidative stress. BSH is an equivalent of glutathione (GSH) in Firmicutes. This protein is a NADPH-dependent bacilliredoxin reductase, which debacillithiolates (removes BSH) the S-bacillithiolated BrxB (BrxB-SSB), and to a lesser extent BrxC (BrxC-SSB). Involved in a redox cascade increasing the efficacy of BrxB function by reducing BrxB-SSB and thus reactivating it. Has NADPH-dependent oxidase activity under aerobic conditions producing hydrogen peroxide (H(2)O(2)). The chain is Bacilliredoxin reductase Bdr from Bacillus subtilis (strain 168).